A 388-amino-acid polypeptide reads, in one-letter code: MICRTIVEGTTKISVPVPPPDANFPPSAAPVFYNPEMELNRDINVAATAAFVERLLSKKDILREEIRYVDAFSASGIRGLRIAGEVGIHSTMNDWSHEAFELIKENIKINGLEEKAQATRRNANVLLHEQRFHIVDVDPFGTPSPYLDAAASSAYSMLSVTATDTAPLCGAHLNSGIRKYASVPLNTEYHSEMGLRVLLGACARELAKHEKGMLPLLSHVTRHYVRTYLEVLPGSRKADKTLKSMGFVAHCPRCGFRKPVYGLAVHIEKECPECGGLTKIAGPLWLGPYREPEFCNEVISELEAHPLNTKEKVRKIITFCRDELDIPMFYDQHVICKELGASATGIESLIEALRAGGFEASRTHFTGTSFKTDAPIAEIKKIILALSG.

One can recognise a Trm1 methyltransferase domain in the interval 4–383 (RTIVEGTTKI…APIAEIKKII (380 aa)). Positions 41, 78, 94, and 123 each coordinate S-adenosyl-L-methionine. Cys-251, Cys-254, Cys-271, and Cys-274 together coordinate Zn(2+).

The protein belongs to the class I-like SAM-binding methyltransferase superfamily. Trm1 family.

The enzyme catalyses guanosine(26) in tRNA + 2 S-adenosyl-L-methionine = N(2)-dimethylguanosine(26) in tRNA + 2 S-adenosyl-L-homocysteine + 2 H(+). Functionally, dimethylates a single guanine residue at position 26 of a number of tRNAs using S-adenosyl-L-methionine as donor of the methyl groups. The protein is tRNA (guanine(26)-N(2))-dimethyltransferase of Methanosarcina mazei (strain ATCC BAA-159 / DSM 3647 / Goe1 / Go1 / JCM 11833 / OCM 88) (Methanosarcina frisia).